Consider the following 384-residue polypeptide: Histidinol-phosphate aminotransferase (384 aa).

Lys-223 carries the post-translational modification N6-(pyridoxal phosphate)lysine.

The protein belongs to the class-II pyridoxal-phosphate-dependent aminotransferase family. It depends on pyridoxal 5'-phosphate as a cofactor.

It catalyses the reaction L-histidinol phosphate + 2-oxoglutarate = 3-(imidazol-4-yl)-2-oxopropyl phosphate + L-glutamate. It functions in the pathway amino-acid biosynthesis; L-histidine biosynthesis; L-histidine from 5-phospho-alpha-D-ribose 1-diphosphate: step 7/9. This is Histidinol-phosphate aminotransferase (his3) from Schizosaccharomyces pombe (strain 972 / ATCC 24843) (Fission yeast).